Here is a 188-residue protein sequence, read N- to C-terminus: MSIKSDKWIRRMAQEHGMIEPFVERQVRGEGADRVISFGVSSYGYDVRCADEFKVFTNINSATVDPKNFDEKSFVDIKSDVCIIPPNSFALARTVEYFRIPRNVLTICLGKSTYARCGIIVNVTPLEPEWEGHVTLEFSNTTTLPAKIYANEGVAQMLFLESDEECEVSYKDRGGKYQGQRGVTLPRT.

DCTP-binding positions include 111 to 116 (KSTYAR), 135 to 137 (TLE), glutamine 156, tyrosine 170, and glutamine 180. Glutamate 137 (proton donor/acceptor) is an active-site residue.

The protein belongs to the dCTP deaminase family. Homotrimer.

It catalyses the reaction dCTP + H2O + H(+) = dUTP + NH4(+). It functions in the pathway pyrimidine metabolism; dUMP biosynthesis; dUMP from dCTP (dUTP route): step 1/2. In terms of biological role, catalyzes the deamination of dCTP to dUTP. The protein is dCTP deaminase of Pseudomonas savastanoi pv. phaseolicola (strain 1448A / Race 6) (Pseudomonas syringae pv. phaseolicola (strain 1448A / Race 6)).